We begin with the raw amino-acid sequence, 538 residues long: NAD(P)H-quinone oxidoreductase chain 4 (538 aa).

14 helical membrane passes run 11 to 31 (FPWL…VPFI), 43 to 63 (YALI…FKGF), 95 to 115 (MPLI…AWPV), 119 to 139 (PKLF…VFAV), 143 to 163 (LLFF…LAIW), 175 to 195 (FIIY…AMGF), 217 to 237 (GFQL…LPIV), 251 to 271 (TAPV…YALL), 285 to 305 (FAPL…LTSF), 314 to 334 (IAYS…SFSS), 340 to 360 (AMLQ…LVGA), 382 to 404 (IMFA…SGFI), 425 to 445 (IVVA…LLSM), and 472 to 492 (IYII…PKIM).

It belongs to the complex I subunit 4 family.

It is found in the cellular thylakoid membrane. It carries out the reaction a plastoquinone + NADH + (n+1) H(+)(in) = a plastoquinol + NAD(+) + n H(+)(out). The enzyme catalyses a plastoquinone + NADPH + (n+1) H(+)(in) = a plastoquinol + NADP(+) + n H(+)(out). NDH-1 shuttles electrons from NAD(P)H, via FMN and iron-sulfur (Fe-S) centers, to quinones in the respiratory chain. The immediate electron acceptor for the enzyme in this species is believed to be plastoquinone. Couples the redox reaction to proton translocation (for every two electrons transferred, four hydrogen ions are translocated across the cytoplasmic membrane), and thus conserves the redox energy in a proton gradient. The chain is NAD(P)H-quinone oxidoreductase chain 4 from Prochlorococcus marinus (strain NATL2A).